A 626-amino-acid chain; its full sequence is MLAFAARTVVKPLGFLKPFSLMKASSRFKAHQDALPRLPVPPLQQSLDHYLKALQPIVSEEEWAHTKQLVDEFQASGGVGERLQKGLERRARKTENWLSEWWLKTAYLQYRQPVVIYSSPGVMLPKQDFVDLQGQLRFAAKLIEGVLDFKVMIDNETLPVEYLGGKPLCMNQYYQILSSCRVPGPKQDTVSNFSKTKKPPTHITVVHNYQFFELDVYHSDGTPLTADQIFVQLEKIWNSSLQTNKEPVGILTSNHRNSWAKAYNTLIKDKVNRDSVRSIQKSIFTVCLDATMPRVSEDVYRSHVAGQMLHGGGSRLNSGNRWFDKTLQFIVAEDGSCGLVYEHAAAEGPPIVTLLDYVIEYTKKPELVRSPLVPLPMPKKLRFNITPEIKSDIEKAKQNLSIMIQDLDITVMVFHHFGKDFPKSEKLSPDAFIQMALQLAYYRIYGQACATYESASLRMFHLGRTDTIRSASMDSLTFVKAMDDSSVTEHQKVELLRKAVQAHRGYTDRAIRGEAFDRHLLGLKLQAIEDLVSMPDIFMDTSYAIAMHFHLSTSQVPAKTDCVMFFGPVVPDGYGVCYNPMEAHINFSLSAYNSCAETNAARLAHYLEKALLDMRALLQSHPRAKL.

Position 93 is an N6-succinyllysine (lysine 93). Lysine 261 bears the N6-acetyllysine; alternate mark. Lysine 261 is subject to N6-succinyllysine; alternate. Lysine 268 carries the N6-acetyllysine modification. Histidine 343 (proton acceptor) is an active-site residue. Residues lysine 419 and 423–430 contribute to the CoA site; that span reads KSEKLSPD. 2 residues coordinate (R)-carnitine: tyrosine 452 and serine 454. CoA is bound at residue serine 456. Residue threonine 465 participates in (R)-carnitine binding. Residues arginine 504 and glutamine 555 each coordinate CoA. The short motif at 624 to 626 is the Microbody targeting signal element; that stretch reads AKL.

Belongs to the carnitine/choline acetyltransferase family. As to quaternary structure, monomer. As to expression, mostly in skeletal muscle, less in heart, liver and pancreas, only weakly detectable in brain, placenta, lung and kidney.

The protein localises to the endoplasmic reticulum. It is found in the peroxisome. Its subcellular location is the mitochondrion inner membrane. The protein resides in the mitochondrion. The catalysed reaction is (R)-carnitine + acetyl-CoA = O-acetyl-(R)-carnitine + CoA. It catalyses the reaction propanoyl-CoA + (R)-carnitine = O-propanoyl-(R)-carnitine + CoA. It carries out the reaction butanoyl-CoA + (R)-carnitine = O-butanoyl-(R)-carnitine + CoA. The enzyme catalyses hexanoyl-CoA + (R)-carnitine = O-hexanoyl-(R)-carnitine + CoA. The catalysed reaction is octanoyl-CoA + (R)-carnitine = O-octanoyl-(R)-carnitine + CoA. It catalyses the reaction decanoyl-CoA + (R)-carnitine = O-decanoyl-(R)-carnitine + CoA. It carries out the reaction 3-methylbutanoyl-CoA + (R)-carnitine = O-3-methylbutanoyl-(R)-carnitine + CoA. The enzyme catalyses 2-methylpropanoyl-CoA + (R)-carnitine = O-isobutanoyl-(R)-carnitine + CoA. The catalysed reaction is 2-methylbutanoyl-CoA + (R)-carnitine = O-2-methylbutanoyl-(R)-carnitine + CoA. It catalyses the reaction acetoacetyl-CoA + (R)-carnitine = O-3-oxobutanoyl-(R)-carnitine + CoA. It carries out the reaction 3-hydroxybutanoyl-CoA + (R)-carnitine = O-3-hydroxybutanoyl-(R)-carnitine + CoA. The enzyme catalyses 4,8-dimethylnonanoyl-CoA + (R)-carnitine = O-4,8-dimethylnonanoyl-(R)-carnitine + CoA. The catalysed reaction is 2,6-dimethylheptanoyl-CoA + (R)-carnitine = O-2,6-dimethylheptanoyl-(R)-carnitine + CoA. Catalyzes the reversible transfer of acyl groups from carnitine to coenzyme A (CoA) and regulates the acyl-CoA/CoA ratio. Also plays a crucial role in the transport of fatty acids for beta-oxidation. Responsible for the synthesis of short- and branched-chain acylcarnitines. Active towards some branched-chain amino acid oxidation pathway (BCAAO) intermediates. Trans-2-enoyl-CoAs and 2-methylacyl-CoAs are poor substrates. The polypeptide is Carnitine O-acetyltransferase (Homo sapiens (Human)).